Here is a 405-residue protein sequence, read N- to C-terminus: uncharacterized protein (405 aa).

13 consecutive transmembrane segments (helical) span residues 19–39, 48–68, 85–105, 106–126, 129–149, 156–176, 178–198, 224–244, 252–272, 283–303, 309–329, 344–364, and 366–386; these read IVSI…PLAV, MGFS…ATLL, IVVF…LADI, ASAW…ILGI, SFAG…LHIG, GIVT…CYAW, GLQG…LLAL, GMAL…ITLF, GAAF…LLFP, VAMI…TAAM, IGVL…GVVA, TYTV…GLVM, and WAGV…ALLL.

It belongs to the major facilitator superfamily. YhhS family.

The protein resides in the cell inner membrane. This is an uncharacterized protein from Salmonella enteritidis PT4 (strain P125109).